A 392-amino-acid polypeptide reads, in one-letter code: Odorant receptor 9a (392 aa).

The Cytoplasmic segment spans residues 1-41 (MSDKVKGKKQEEKDQSLRVQILVYRCMGIDLWSPTMANDRP). A helical transmembrane segment spans residues 42–62 (WLTFVTMGPLFLFMVPMFLAA). Residues 63–74 (HEYITQVSLLSD) lie on the Extracellular side of the membrane. A helical transmembrane segment spans residues 75-95 (TLGSTFASMLTLVKFLLFCYH). Residues 96–141 (RKEFVGLIYHIRAILAKEIEVWPDAREIIEVENQSDQMLSLTYTRC) lie on the Cytoplasmic side of the membrane. A helical membrane pass occupies residues 142–162 (FGLAGIFAALKPFVGIILSSI). At 163–202 (RGDEIHLELPHNGVYPYDLQVVMFYVPTYLWNVMASYSAV) the chain is on the extracellular side. The helical transmembrane segment at 203 to 223 (TMALCVDSLLFFFTYNVCAIF) threads the bilayer. Topologically, residues 224-268 (KIAKHRMIHLPAVGGKEELEGLVQVLLLHQKGLQIADHIADKYRP) are cytoplasmic. Residues 269–289 (LIFLQFFLSALQICFIGFQVA) traverse the membrane as a helical segment. Topologically, residues 290-297 (DLFPNPQS) are extracellular. A helical membrane pass occupies residues 298–318 (LYFIAFVGSLLIALFIYSKCG). Over 319–362 (ENIKSASLDFGNGLYETNWTDFSPPTKRALLIAAMRAQRPCQMK) the chain is Cytoplasmic. The helical transmembrane segment at 363–383 (GYFFEASMATFSTIVRSAVSY) threads the bilayer. The Extracellular segment spans residues 384-392 (IMMLRSFNA).

It belongs to the insect chemoreceptor superfamily. Heteromeric odorant receptor channel (TC 1.A.69) family. Or1a subfamily. In terms of assembly, interacts with Orco. Complexes exist early in the endomembrane system in olfactory sensory neurons (OSNs), coupling these complexes to the conserved ciliary trafficking pathway. As to expression, expressed in olfactory sensory neurons in the antenna.

The protein localises to the cell membrane. Its function is as follows. Odorant receptor which mediates acceptance or avoidance behavior, depending on its substrates. The odorant receptor repertoire encodes a large collection of odor stimuli that vary widely in identity, intensity, and duration. May form a complex with Orco to form odorant-sensing units, providing sensitive and prolonged odorant signaling and calcium permeability. This chain is Odorant receptor 9a (Or9a), found in Drosophila melanogaster (Fruit fly).